Here is a 64-residue protein sequence, read N- to C-terminus: Large ribosomal subunit protein uL30 (64 aa).

Positions 1 to 22 (MAKAAKTIKVEQTGSAIRRHHS) are disordered.

The protein belongs to the universal ribosomal protein uL30 family. In terms of assembly, part of the 50S ribosomal subunit.

In Nitrobacter winogradskyi (strain ATCC 25391 / DSM 10237 / CIP 104748 / NCIMB 11846 / Nb-255), this protein is Large ribosomal subunit protein uL30.